Consider the following 353-residue polypeptide: Quinolinate synthase (353 aa).

Iminosuccinate-binding residues include His-47 and Ser-68. A [4Fe-4S] cluster-binding site is contributed by Cys-113. Iminosuccinate-binding positions include 139–141 (YAN) and Ser-156. Cys-200 is a binding site for [4Fe-4S] cluster. Iminosuccinate-binding positions include 226–228 (HPE) and Thr-243. Residue Cys-297 coordinates [4Fe-4S] cluster.

It belongs to the quinolinate synthase family. Type 1 subfamily. [4Fe-4S] cluster serves as cofactor.

Its subcellular location is the cytoplasm. The enzyme catalyses iminosuccinate + dihydroxyacetone phosphate = quinolinate + phosphate + 2 H2O + H(+). Its pathway is cofactor biosynthesis; NAD(+) biosynthesis; quinolinate from iminoaspartate: step 1/1. Its function is as follows. Catalyzes the condensation of iminoaspartate with dihydroxyacetone phosphate to form quinolinate. The protein is Quinolinate synthase of Erwinia tasmaniensis (strain DSM 17950 / CFBP 7177 / CIP 109463 / NCPPB 4357 / Et1/99).